The chain runs to 89 residues: Small ribosomal subunit protein uS14A (89 aa).

This sequence belongs to the universal ribosomal protein uS14 family. Contacts proteins S3 and S10. Part of the 30S ribosomal subunit.

Binds 16S rRNA, required for the assembly of 30S particles and may also be responsible for determining the conformation of the 16S rRNA at the A site. Its function is as follows. Non-essential protein. A second form of uS14, it can integrate into the 30S subunit where it partially compensates for loss of the major uS14 protein (AC P12878) in restoring 70S formation, although it does not seem to be incorporated into the ribosome as well as the major uS14. This is Small ribosomal subunit protein uS14A from Bacillus subtilis (strain 168).